A 67-amino-acid polypeptide reads, in one-letter code: MNKIILFSAVFLALVFCAEAMPRESVNILNAENEPDDTVDIDEGLPDAFDEDYEQDGHNPYPCRGDC.

The signal sequence occupies residues 1 to 20 (MNKIILFSAVFLALVFCAEA). Acidic residues predominate over residues 35–54 (PDDTVDIDEGLPDAFDEDYE). Positions 35-67 (PDDTVDIDEGLPDAFDEDYEQDGHNPYPCRGDC) are disordered. The Integrin-binding motif signature appears at 64–66 (RGD).

In terms of tissue distribution, salivary gland.

Its subcellular location is the secreted. Functionally, inhibits collagen- and ADP-induced host platelet aggregation by blocking the binding of host integrin alpha-IIb/beta-3 (ITGA2B/ITGB3) to fibrinogen. Inhibits the intrinsic blood coagulation pathway in the host by blocking the activity of host coagulation factor XIIa (F12). This Lutzomyia ayacuchensis (Sand fly) protein is Ayadualin.